Consider the following 43-residue polypeptide: Protein PsbN (43 aa).

Residues 7–27 (VTIFISGLLVSFTGYALYIAF) traverse the membrane as a helical segment.

The protein belongs to the PsbN family.

It is found in the plastid. It localises to the chloroplast thylakoid membrane. In terms of biological role, may play a role in photosystem I and II biogenesis. This is Protein PsbN from Dioscorea bulbifera (Air potato).